The following is a 157-amino-acid chain: Ciliary microtubule inner protein 5 (157 aa).

2 disordered regions span residues 1 to 57 (MGSR…SALG) and 92 to 124 (DPMGNKKEPVKLPDHVPRFSDTVPNSTNRAVGS). The span at 92 to 109 (DPMGNKKEPVKLPDHVPR) shows a compositional bias: basic and acidic residues.

It localises to the cell projection. It is found in the cilium. This Bos taurus (Bovine) protein is Ciliary microtubule inner protein 5 (CIMIP5).